Here is a 468-residue protein sequence, read N- to C-terminus: Glutamine synthetase (468 aa).

Positions 11–96 (HDVKWIDLRF…LVCDIIEPST (86 aa)) constitute a GS beta-grasp domain. A GS catalytic domain is found at 104–468 (PRAIAHRAEE…PLEYELYYSC (365 aa)). Mg(2+)-binding residues include Glu-129 and Glu-131. Position 207 (Glu-207) interacts with ATP. The Mg(2+) site is built by Glu-212 and Glu-220. L-glutamate contacts are provided by residues 264-265 (NG) and Gly-265. Mg(2+) is bound at residue His-269. ATP contacts are provided by residues 271–273 (HMS) and Ser-273. 3 residues coordinate L-glutamate: Arg-321, Glu-327, and Arg-339. 3 residues coordinate ATP: Arg-339, Arg-344, and Arg-352. Glu-357 lines the Mg(2+) pocket. Position 359 (Arg-359) interacts with L-glutamate. Tyr-397 bears the O-AMP-tyrosine mark.

The protein belongs to the glutamine synthetase family. In terms of assembly, oligomer of 12 subunits arranged in the form of two hexagons. It depends on Mg(2+) as a cofactor. The cofactor is Mn(2+).

The enzyme catalyses L-glutamate + NH4(+) + ATP = L-glutamine + ADP + phosphate + H(+). When cellular nitrogen levels are high, the C-terminal adenylyl transferase (AT) of GlnE inhibits GlnA by covalent transfer of an adenylyl group from ATP to Tyr-397. Conversely, when nitrogen levels are low, the N-terminal adenylyl removase (AR) of GlnE activates GlnA by removing the adenylyl group by phosphorolysis. The fully adenylated enzyme complex is inactive. Catalyzes the formation of glutamine from glutamate and ammonia. In vitro, can also use hydroxylamine, methylamine and ethylamine, with 32%, 7% and 1% activity compared to ammonia, respectively. The chain is Glutamine synthetase from Pseudomonas taetrolens.